Consider the following 90-residue polypeptide: Small ribosomal subunit protein bS20 (90 aa).

It belongs to the bacterial ribosomal protein bS20 family.

Functionally, binds directly to 16S ribosomal RNA. This chain is Small ribosomal subunit protein bS20, found in Francisella tularensis subsp. tularensis (strain FSC 198).